A 371-amino-acid polypeptide reads, in one-letter code: MSIHSASPITRRKSRKIWVGNVPVGGDAPIAVQSMTNTETCDVAATVAQIRRLEDAGADIVRVSVPDMDAAEAFGKIKQQVNVPLVADIHFDYRIALRVAELGVDCLRINPGNIGREDRVKAVVDAARERNIPIRIGVNAGSLEKDLQKKYGEPTPEALLESAMRHVDHLDKLDFQNFKVSVKASDVFMAVAAYRLLARQIEQPLHLGITEAGGLRSGTVKSAVGLGMLLAEGIGDTIRISLAADPVEEIKVGFDILKSLHLRSRGINFIACPSCSRQNFDVVKTMNELEGRLEDLLVPMDVAVIGCVVNGPGEAKEAHVGLTGGTPNLVYIDGKPSQKLTNDNLVDELERLIRQKAAEKAEADASLIARG.

Residues Cys272, Cys275, Cys307, and Glu314 each coordinate [4Fe-4S] cluster.

The protein belongs to the IspG family. [4Fe-4S] cluster serves as cofactor.

It carries out the reaction (2E)-4-hydroxy-3-methylbut-2-enyl diphosphate + oxidized [flavodoxin] + H2O + 2 H(+) = 2-C-methyl-D-erythritol 2,4-cyclic diphosphate + reduced [flavodoxin]. It participates in isoprenoid biosynthesis; isopentenyl diphosphate biosynthesis via DXP pathway; isopentenyl diphosphate from 1-deoxy-D-xylulose 5-phosphate: step 5/6. Its function is as follows. Converts 2C-methyl-D-erythritol 2,4-cyclodiphosphate (ME-2,4cPP) into 1-hydroxy-2-methyl-2-(E)-butenyl 4-diphosphate. This chain is 4-hydroxy-3-methylbut-2-en-1-yl diphosphate synthase (flavodoxin), found in Pseudomonas paraeruginosa (strain DSM 24068 / PA7) (Pseudomonas aeruginosa (strain PA7)).